Consider the following 399-residue polypeptide: Arginase (399 aa).

H193, D216, H218, and D220 together coordinate Mn(2+). Substrate contacts are provided by residues 218-222 (HADIN), 229-231 (SGN), and D273. 2 residues coordinate Mn(2+): D322 and D324. Substrate-binding residues include T336 and E367.

It belongs to the arginase family. The cofactor is Mn(2+).

Its subcellular location is the cytoplasm. It catalyses the reaction L-arginine + H2O = urea + L-ornithine. It participates in nitrogen metabolism; urea cycle; L-ornithine and urea from L-arginine: step 1/1. The polypeptide is Arginase (CAR1) (Eremothecium gossypii (strain ATCC 10895 / CBS 109.51 / FGSC 9923 / NRRL Y-1056) (Yeast)).